A 1058-amino-acid polypeptide reads, in one-letter code: Carbamoyl phosphate synthase pyrimidine-specific large chain (1058 aa).

Positions 1 to 401 are carboxyphosphate synthetic domain; the sequence is MPKRTDIHKI…ATLKAVRSLE (401 aa). The ATP site is built by Arg129, Arg169, Gly175, Gly176, Gln208, Ile210, Glu215, Gly241, Ile242, His243, Gln284, and Glu298. Positions 133–327 constitute an ATP-grasp 1 domain; sequence KALMEELGEP…IAKMAAKIAV (195 aa). Residues Gln284, Glu298, and Asn300 each contribute to the Mg(2+) site. Gln284, Glu298, and Asn300 together coordinate Mn(2+). The interval 402 to 546 is oligomerization domain; sequence IGVHHVEEPA…YGTYEFENES (145 aa). Residues 547–929 are carbamoyl phosphate synthetic domain; the sequence is IVTKRPSVLV…ALYKAFEAAK (383 aa). The ATP-grasp 2 domain occupies 671–861; it reads DKVIKALAIP…MAQVATRAIL (191 aa). 10 residues coordinate ATP: Arg707, Ser746, Leu748, Glu752, Gly777, Val778, His779, Ser780, Gln820, and Glu832. Positions 820, 832, and 834 each coordinate Mg(2+). Mn(2+) is bound by residues Gln820, Glu832, and Asn834. Positions 930–1058 constitute an MGS-like domain; that stretch reads LHVPSHGNVL…ESQSFVTQAL (129 aa). Positions 930 to 1058 are allosteric domain; it reads LHVPSHGNVL…ESQSFVTQAL (129 aa).

Belongs to the CarB family. Composed of two chains; the small (or glutamine) chain promotes the hydrolysis of glutamine to ammonia, which is used by the large (or ammonia) chain to synthesize carbamoyl phosphate. Tetramer of heterodimers (alpha,beta)4. The cofactor is Mg(2+). Requires Mn(2+) as cofactor.

It carries out the reaction hydrogencarbonate + L-glutamine + 2 ATP + H2O = carbamoyl phosphate + L-glutamate + 2 ADP + phosphate + 2 H(+). The enzyme catalyses hydrogencarbonate + NH4(+) + 2 ATP = carbamoyl phosphate + 2 ADP + phosphate + 2 H(+). It participates in amino-acid biosynthesis; L-arginine biosynthesis; carbamoyl phosphate from bicarbonate: step 1/1. It functions in the pathway pyrimidine metabolism; UMP biosynthesis via de novo pathway; (S)-dihydroorotate from bicarbonate: step 1/3. In terms of biological role, small subunit of the glutamine-dependent carbamoyl phosphate synthetase (CPSase). CPSase catalyzes the formation of carbamoyl phosphate from the ammonia moiety of glutamine, carbonate, and phosphate donated by ATP, constituting the first step of the biosynthetic pathway leading to pyrimidine nucleotides. The large subunit (synthetase) binds the substrates ammonia (free or transferred from glutamine from the small subunit), hydrogencarbonate and ATP and carries out an ATP-coupled ligase reaction, activating hydrogencarbonate by forming carboxy phosphate which reacts with ammonia to form carbamoyl phosphate. The polypeptide is Carbamoyl phosphate synthase pyrimidine-specific large chain (pyrAB) (Lactiplantibacillus plantarum (strain ATCC BAA-793 / NCIMB 8826 / WCFS1) (Lactobacillus plantarum)).